An 838-amino-acid polypeptide reads, in one-letter code: Protein P (838 aa).

The segment at 1–179 (MPLSYQHFRK…FCGSPYSWEQ (179 aa)) is terminal protein domain (TP). Residues 180–341 (ELQHSQRHGD…YCLSHLVNLR (162 aa)) form a spacer region. A disordered region spans residues 219-245 (GLQPHQGPLASSQPGRSGSIRARAHPS). The interval 342 to 685 (EDWGPCDDHG…YMNLYPVARQ (344 aa)) is polymerase/reverse transcriptase domain (RT). The region spanning 352–595 (EHHIRIPRTP…YSLNFMGYII (244 aa)) is the Reverse transcriptase domain. The Mg(2+) site is built by Asp424, Asp546, and Asp547.

Belongs to the hepadnaviridae P protein family.

It carries out the reaction DNA(n) + a 2'-deoxyribonucleoside 5'-triphosphate = DNA(n+1) + diphosphate. It catalyses the reaction Endonucleolytic cleavage to 5'-phosphomonoester.. With respect to regulation, activated by host HSP70 and HSP40 in vitro to be able to bind the epsilon loop of the pgRNA. Because deletion of the RNase H region renders the protein partly chaperone-independent, the chaperones may be needed indirectly to relieve occlusion of the RNA-binding site by this domain. Inhibited by several reverse-transcriptase inhibitors: Lamivudine, Adefovir and Entecavir. Multifunctional enzyme that converts the viral RNA genome into dsDNA in viral cytoplasmic capsids. This enzyme displays a DNA polymerase activity that can copy either DNA or RNA templates, and a ribonuclease H (RNase H) activity that cleaves the RNA strand of RNA-DNA heteroduplexes in a partially processive 3'- to 5'-endonucleasic mode. Neo-synthesized pregenomic RNA (pgRNA) are encapsidated together with the P protein, and reverse-transcribed inside the nucleocapsid. Initiation of reverse-transcription occurs first by binding the epsilon loop on the pgRNA genome, and is initiated by protein priming, thereby the 5'-end of (-)DNA is covalently linked to P protein. Partial (+)DNA is synthesized from the (-)DNA template and generates the relaxed circular DNA (RC-DNA) genome. After budding and infection, the RC-DNA migrates in the nucleus, and is converted into a plasmid-like covalently closed circular DNA (cccDNA). The activity of P protein does not seem to be necessary for cccDNA generation, and is presumably released from (+)DNA by host nuclear DNA repair machinery. This chain is Protein P, found in Hepatitis B virus genotype A2 subtype adw (isolate Japan/Nishioka/1983) (HBV-A).